The following is a 570-amino-acid chain: Sulfite reductase [NADPH] hemoprotein beta-component (570 aa).

Residues Cys-434, Cys-440, Cys-479, and Cys-483 each coordinate [4Fe-4S] cluster. Residue Cys-483 coordinates siroheme.

The protein belongs to the nitrite and sulfite reductase 4Fe-4S domain family. In terms of assembly, alpha(8)-beta(8). The alpha component is a flavoprotein, the beta component is a hemoprotein. Requires siroheme as cofactor. [4Fe-4S] cluster is required as a cofactor.

It carries out the reaction hydrogen sulfide + 3 NADP(+) + 3 H2O = sulfite + 3 NADPH + 4 H(+). Its pathway is sulfur metabolism; hydrogen sulfide biosynthesis; hydrogen sulfide from sulfite (NADPH route): step 1/1. In terms of biological role, component of the sulfite reductase complex that catalyzes the 6-electron reduction of sulfite to sulfide. This is one of several activities required for the biosynthesis of L-cysteine from sulfate. The protein is Sulfite reductase [NADPH] hemoprotein beta-component of Shigella sonnei (strain Ss046).